Here is a 647-residue protein sequence, read N- to C-terminus: Spindle pole body-associated protein VIK1 (647 aa).

Polar residues predominate over residues 36–51 (NTTNTMNGSRPSSMKS). The interval 36–55 (NTTNTMNGSRPSSMKSSLAL) is disordered. Positions 202–350 (DHEITEEISQ…SKQEKFYNDT (149 aa)) form a coiled coil.

As to quaternary structure, interacts with KAR3; the interaction is direct.

It localises to the cytoplasm. The protein resides in the cytoskeleton. It is found in the microtubule organizing center. Its subcellular location is the spindle pole body. The protein localises to the nucleus. Together with the minus end-directed microtubule motor KAR3, plays a role in microtubule organization. Recruits KAR3 to microtubules, and together they may stabilize the polymers. The KAR3-VIK1 heterodimer cross-links anti-parallel microtubules. Targets and/or maintains KAR3 at the spindle pole body during vegetative growth. The polypeptide is Spindle pole body-associated protein VIK1 (VIK1) (Saccharomyces cerevisiae (strain ATCC 204508 / S288c) (Baker's yeast)).